The primary structure comprises 294 residues: Malate dehydrogenase (294 aa).

Residues 7 to 12 and D32 contribute to the NAD(+) site; that span reads GAGRVG. Substrate-binding residues include R81 and R87. NAD(+) is bound by residues N94 and 117–119; that span reads VTN. N119 and R150 together coordinate substrate. H172 functions as the Proton acceptor in the catalytic mechanism.

This sequence belongs to the LDH/MDH superfamily. In terms of assembly, homodimer.

The protein localises to the cytoplasm. It catalyses the reaction (S)-malate + NAD(+) = oxaloacetate + NADH + H(+). In terms of biological role, catalyzes the reversible oxidation of malate to oxaloacetate. Can also oxidize tartrate. The chain is Malate dehydrogenase (mdh) from Archaeoglobus fulgidus (strain ATCC 49558 / DSM 4304 / JCM 9628 / NBRC 100126 / VC-16).